The sequence spans 476 residues: Glycogen synthase (476 aa).

Lysine 15 provides a ligand contact to ADP-alpha-D-glucose.

This sequence belongs to the glycosyltransferase 1 family. Bacterial/plant glycogen synthase subfamily.

The enzyme catalyses [(1-&gt;4)-alpha-D-glucosyl](n) + ADP-alpha-D-glucose = [(1-&gt;4)-alpha-D-glucosyl](n+1) + ADP + H(+). It functions in the pathway glycan biosynthesis; glycogen biosynthesis. Synthesizes alpha-1,4-glucan chains using ADP-glucose. This Haemophilus influenzae (strain PittGG) protein is Glycogen synthase.